A 141-amino-acid chain; its full sequence is Hemoglobin subunit alpha-D (141 aa).

One can recognise a Globin domain in the interval 1–141 (MLTADDKKLI…VAAVLAEKYR (141 aa)). His58 and His87 together coordinate heme b.

This sequence belongs to the globin family. Heterotetramer of two alpha-D chains and two beta chains. As to expression, red blood cells.

Functionally, involved in oxygen transport from the lung to the various peripheral tissues. This Aegypius monachus (Cinereous vulture) protein is Hemoglobin subunit alpha-D (HBAD).